The chain runs to 99 residues: Biogenesis of lysosome-related organelles complex 1 subunit SNN1 (99 aa).

Residues S34–V94 are a coiled coil.

The protein belongs to the SNAPIN family. In terms of assembly, component of the biogenesis of lysosome-related organelles complex-1 (BLOC-1).

It localises to the endosome. Component of the biogenesis of lysosome-related organelles complex-1 (BLOC-1), a complex involved in endosomal cargo sorting. The chain is Biogenesis of lysosome-related organelles complex 1 subunit SNN1 (SNN1) from Kluyveromyces lactis (strain ATCC 8585 / CBS 2359 / DSM 70799 / NBRC 1267 / NRRL Y-1140 / WM37) (Yeast).